We begin with the raw amino-acid sequence, 150 residues long: Large ribosomal subunit protein bL9 (150 aa).

It belongs to the bacterial ribosomal protein bL9 family.

In terms of biological role, binds to the 23S rRNA. In Hamiltonella defensa subsp. Acyrthosiphon pisum (strain 5AT), this protein is Large ribosomal subunit protein bL9.